Consider the following 792-residue polypeptide: Phenylalanine--tRNA ligase beta subunit (792 aa).

Residues 39–147 (GESLGQVVVA…DDAPVGQALA (109 aa)) form the tRNA-binding domain. Residues 400 to 475 (PQPARILLRR…RIHGYDRVPT (76 aa)) form the B5 domain. 4 residues coordinate Mg(2+): aspartate 453, aspartate 459, glutamate 462, and aspartate 463. Residues 698–791 (SRFPSVRRDL…IEREHRARIR (94 aa)) enclose the FDX-ACB domain.

The protein belongs to the phenylalanyl-tRNA synthetase beta subunit family. Type 1 subfamily. In terms of assembly, tetramer of two alpha and two beta subunits. Mg(2+) is required as a cofactor.

It is found in the cytoplasm. The catalysed reaction is tRNA(Phe) + L-phenylalanine + ATP = L-phenylalanyl-tRNA(Phe) + AMP + diphosphate + H(+). In Xanthomonas oryzae pv. oryzae (strain KACC10331 / KXO85), this protein is Phenylalanine--tRNA ligase beta subunit.